Consider the following 158-residue polypeptide: NAD(P)H-quinone oxidoreductase subunit N (158 aa).

The protein belongs to the complex I NdhN subunit family. NDH-1 can be composed of about 15 different subunits; different subcomplexes with different compositions have been identified which probably have different functions.

It is found in the cellular thylakoid membrane. The enzyme catalyses a plastoquinone + NADH + (n+1) H(+)(in) = a plastoquinol + NAD(+) + n H(+)(out). It carries out the reaction a plastoquinone + NADPH + (n+1) H(+)(in) = a plastoquinol + NADP(+) + n H(+)(out). Functionally, NDH-1 shuttles electrons from an unknown electron donor, via FMN and iron-sulfur (Fe-S) centers, to quinones in the respiratory and/or the photosynthetic chain. The immediate electron acceptor for the enzyme in this species is believed to be plastoquinone. Couples the redox reaction to proton translocation, and thus conserves the redox energy in a proton gradient. Cyanobacterial NDH-1 also plays a role in inorganic carbon-concentration. This is NAD(P)H-quinone oxidoreductase subunit N from Prochlorococcus marinus (strain MIT 9215).